Consider the following 440-residue polypeptide: Diaminopimelate decarboxylase (440 aa).

K61 is modified (N6-(pyridoxal phosphate)lysine). Residues G234 and 275-278 each bind pyridoxal 5'-phosphate; that span reads EPGR. R278, R314, and Y318 together coordinate substrate. C348 serves as the catalytic Proton donor. Positions 349 and 384 each coordinate substrate. Residue Y384 coordinates pyridoxal 5'-phosphate. A compositionally biased stretch (low complexity) spans 421–431; sequence LAPELEPGPAL. The tract at residues 421–440 is disordered; sequence LAPELEPGPALSPRPSRDPR.

The protein belongs to the Orn/Lys/Arg decarboxylase class-II family. LysA subfamily. As to quaternary structure, homodimer. Pyridoxal 5'-phosphate serves as cofactor.

The catalysed reaction is meso-2,6-diaminopimelate + H(+) = L-lysine + CO2. Its pathway is amino-acid biosynthesis; L-lysine biosynthesis via DAP pathway; L-lysine from DL-2,6-diaminopimelate: step 1/1. Its function is as follows. Specifically catalyzes the decarboxylation of meso-diaminopimelate (meso-DAP) to L-lysine. This is Diaminopimelate decarboxylase from Streptomyces coelicolor (strain ATCC BAA-471 / A3(2) / M145).